The following is a 101-amino-acid chain: Small ribosomal subunit protein uS14 (101 aa).

It belongs to the universal ribosomal protein uS14 family. In terms of assembly, part of the 30S ribosomal subunit. Contacts proteins S3 and S10.

Functionally, binds 16S rRNA, required for the assembly of 30S particles and may also be responsible for determining the conformation of the 16S rRNA at the A site. This chain is Small ribosomal subunit protein uS14, found in Shewanella putrefaciens (strain CN-32 / ATCC BAA-453).